The following is a 308-amino-acid chain: L-lactate dehydrogenase 2 (308 aa).

Residues V14, D35, Y65, and 79 to 80 (GA) each bind NAD(+). R88 is a substrate binding site. S101 serves as a coordination point for NAD(+). 120 to 123 (NPVD) lines the substrate pocket. Residue T143 coordinates NAD(+). 148-151 (DTAR) is a substrate binding site. H175 functions as the Proton acceptor in the catalytic mechanism. Residue T225 participates in substrate binding.

The protein belongs to the LDH/MDH superfamily. LDH family. As to quaternary structure, homotetramer.

The protein resides in the cytoplasm. The catalysed reaction is (S)-lactate + NAD(+) = pyruvate + NADH + H(+). It participates in fermentation; pyruvate fermentation to lactate; (S)-lactate from pyruvate: step 1/1. Its function is as follows. Catalyzes the conversion of lactate to pyruvate. This chain is L-lactate dehydrogenase 2, found in Lactobacillus johnsonii (strain CNCM I-12250 / La1 / NCC 533).